A 113-amino-acid chain; its full sequence is UPF0342 protein SPy_0811/M5005_Spy0626 (113 aa).

This sequence belongs to the UPF0342 family.

The protein is UPF0342 protein SPy_0811/M5005_Spy0626 of Streptococcus pyogenes serotype M1.